Here is a 395-residue protein sequence, read N- to C-terminus: Succinyl-diaminopimelate desuccinylase 2 (395 aa).

Histidine 79 is a Zn(2+) binding site. The active site involves aspartate 81. Aspartate 112 contacts Zn(2+). Glutamate 145 functions as the Proton acceptor in the catalytic mechanism. Residues glutamate 146, glutamate 174, and histidine 363 each contribute to the Zn(2+) site.

It belongs to the peptidase M20A family. DapE subfamily. In terms of assembly, homodimer. Zn(2+) serves as cofactor. Co(2+) is required as a cofactor.

It catalyses the reaction N-succinyl-(2S,6S)-2,6-diaminopimelate + H2O = (2S,6S)-2,6-diaminopimelate + succinate. The protein operates within amino-acid biosynthesis; L-lysine biosynthesis via DAP pathway; LL-2,6-diaminopimelate from (S)-tetrahydrodipicolinate (succinylase route): step 3/3. Catalyzes the hydrolysis of N-succinyl-L,L-diaminopimelic acid (SDAP), forming succinate and LL-2,6-diaminopimelate (DAP), an intermediate involved in the bacterial biosynthesis of lysine and meso-diaminopimelic acid, an essential component of bacterial cell walls. The polypeptide is Succinyl-diaminopimelate desuccinylase 2 (Ruegeria sp. (strain TM1040) (Silicibacter sp.)).